Consider the following 1228-residue polypeptide: P3N-PIPO polyprotein (1228 aa).

The region spanning I408–Y547 is the Peptidase S30 domain. Catalysis depends on for P1 proteinase activity residues H456, D465, and S499. Residues K598–C601 carry the Involved in interaction with stylet and aphid transmission motif. Residues P856–K858 carry the Involved in virions binding and aphid transmission motif. Positions M882–G1004 constitute a Peptidase C6 domain. Catalysis depends on for helper component proteinase activity residues C890 and H963.

This sequence belongs to the potyviridae P3N-PIPO polyprotein family. Interacts (via PIPO domain) with host PCaP1 protein; this interaction may help to anchor the movement complex to the plasma membrane from which the complex could move to the plasmodesmata. Potyviral RNA is expressed as two polyproteins which undergo post-translational proteolytic processing. Genome polyprotein is processed by NIa-pro, P1 and HC-pro proteinases resulting in the production of at least ten individual proteins. P3N-PIPO is cleaved by P1 and HC-pro proteinases resulting in the production of three individual proteins. The P1 proteinase and the HC-pro cleave only their respective C-termini autocatalytically.

It localises to the host cell junction. It is found in the host plasmodesma. It catalyses the reaction Hydrolyzes a Gly-|-Gly bond at its own C-terminus, commonly in the sequence -Tyr-Xaa-Val-Gly-|-Gly, in the processing of the potyviral polyprotein.. Its function is as follows. Required for aphid transmission and also has proteolytic activity. Only cleaves a Gly-Gly dipeptide at its own C-terminus. Interacts with virions and aphid stylets. Acts as a suppressor of RNA-mediated gene silencing, also known as post-transcriptional gene silencing (PTGS), a mechanism of plant viral defense that limits the accumulation of viral RNAs. May have RNA-binding activity. Allows efficient cell to cell propagation, by bypassing the host cell wall barrier. Transports viral genome to neighboring plant cells directly through plasmosdesmata, without any budding. This is P3N-PIPO polyprotein from Carica papaya (Papaya).